A 399-amino-acid polypeptide reads, in one-letter code: Dual-specificity RNA methyltransferase RlmN (399 aa).

Glutamate 122 serves as the catalytic Proton acceptor. Residues 128 to 371 enclose the Radical SAM core domain; the sequence is ETDRGTLCVS…VRTPRGRDIL (244 aa). Cysteines 135 and 374 form a disulfide. Residues cysteine 142, cysteine 146, and cysteine 149 each contribute to the [4Fe-4S] cluster site. S-adenosyl-L-methionine contacts are provided by residues 200-201, serine 232, 254-256, and asparagine 331; these read GE and SLH. Cysteine 374 (S-methylcysteine intermediate) is an active-site residue.

It belongs to the radical SAM superfamily. RlmN family. The cofactor is [4Fe-4S] cluster.

It is found in the cytoplasm. It catalyses the reaction adenosine(2503) in 23S rRNA + 2 reduced [2Fe-2S]-[ferredoxin] + 2 S-adenosyl-L-methionine = 2-methyladenosine(2503) in 23S rRNA + 5'-deoxyadenosine + L-methionine + 2 oxidized [2Fe-2S]-[ferredoxin] + S-adenosyl-L-homocysteine. The enzyme catalyses adenosine(37) in tRNA + 2 reduced [2Fe-2S]-[ferredoxin] + 2 S-adenosyl-L-methionine = 2-methyladenosine(37) in tRNA + 5'-deoxyadenosine + L-methionine + 2 oxidized [2Fe-2S]-[ferredoxin] + S-adenosyl-L-homocysteine. Functionally, specifically methylates position 2 of adenine 2503 in 23S rRNA and position 2 of adenine 37 in tRNAs. m2A2503 modification seems to play a crucial role in the proofreading step occurring at the peptidyl transferase center and thus would serve to optimize ribosomal fidelity. The chain is Dual-specificity RNA methyltransferase RlmN from Rhodopseudomonas palustris (strain ATCC BAA-98 / CGA009).